Here is a 35-residue protein sequence, read N- to C-terminus: Photosystem II reaction center protein M (35 aa).

The chain crosses the membrane as a helical span at residues 5–25; the sequence is ILAFIATALFILVPTAFLLII.

This sequence belongs to the PsbM family. PSII is composed of 1 copy each of membrane proteins PsbA, PsbB, PsbC, PsbD, PsbE, PsbF, PsbH, PsbI, PsbJ, PsbK, PsbL, PsbM, PsbT, PsbX, PsbY, PsbZ, Psb30/Ycf12, at least 3 peripheral proteins of the oxygen-evolving complex and a large number of cofactors. It forms dimeric complexes.

Its subcellular location is the plastid. It is found in the chloroplast thylakoid membrane. Functionally, one of the components of the core complex of photosystem II (PSII). PSII is a light-driven water:plastoquinone oxidoreductase that uses light energy to abstract electrons from H(2)O, generating O(2) and a proton gradient subsequently used for ATP formation. It consists of a core antenna complex that captures photons, and an electron transfer chain that converts photonic excitation into a charge separation. This subunit is found at the monomer-monomer interface. The polypeptide is Photosystem II reaction center protein M (Amborella trichopoda).